Here is a 273-residue protein sequence, read N- to C-terminus: Homeobox protein HMX2 (273 aa).

Positions 1–154 are disordered; sequence MGSKEDVGKG…TGAAKKKTRT (154 aa). The span at 114–123 shows a compositional bias: basic and acidic residues; it reads PDFKEEKERL. Residues 149–208 constitute a DNA-binding region (homeobox); it reads KKKTRTVFSRSQVYQLESTFDMKRYLSSSERACLASSLQLTETQVKTWFQNRRNKWKRQL.

Belongs to the HMX homeobox family. Expressed in the developing CNS, including a specific expression in vestibular structures throughout inner ear development.

It is found in the nucleus. Functionally, transcription factor involved in specification of neuronal cell types and which is required for inner ear and hypothalamus development. In Mus musculus (Mouse), this protein is Homeobox protein HMX2 (Hmx2).